A 222-amino-acid chain; its full sequence is Orotidine 5'-phosphate decarboxylase (222 aa).

Substrate is bound by residues D11, K30, D59–I68, S115, P164–G174, G187, and R188. Residue K61 is the Proton donor of the active site.

This sequence belongs to the OMP decarboxylase family. Type 1 subfamily. In terms of assembly, homodimer.

The catalysed reaction is orotidine 5'-phosphate + H(+) = UMP + CO2. The protein operates within pyrimidine metabolism; UMP biosynthesis via de novo pathway; UMP from orotate: step 2/2. In terms of biological role, catalyzes the decarboxylation of orotidine 5'-monophosphate (OMP) to uridine 5'-monophosphate (UMP). This is Orotidine 5'-phosphate decarboxylase from Saccharolobus solfataricus (strain ATCC 35092 / DSM 1617 / JCM 11322 / P2) (Sulfolobus solfataricus).